The sequence spans 432 residues: G-protein coupled receptor 22 (432 aa).

Residues 1 to 45 lie on the Extracellular side of the membrane; it reads MCFSPVLEINMQSESNVTVRDDIDDIDTNMYQPLSYPLSFQVSLT. N-linked (GlcNAc...) asparagine glycosylation is present at Asn16. The helical transmembrane segment at 46–66 threads the bilayer; that stretch reads GFLMLEIVLGLGSNLTVLVLY. At 67–85 the chain is on the cytoplasmic side; that stretch reads CMKSNLINSVSNIITMNLH. A helical transmembrane segment spans residues 86–106; the sequence is VLDVIICVGCIPLTIVILLLS. Over 107-115 the chain is Extracellular; sequence LESNTALIC. A helical transmembrane segment spans residues 116 to 136; that stretch reads CFHEACVSFASVSTAINVFAI. The Cytoplasmic portion of the chain corresponds to 137-156; the sequence is TLDRYDISVKPANRILTMGR. A helical transmembrane segment spans residues 157–177; the sequence is AVMLMTSIWIFSFFSFLIPFI. Residues 178–208 are Extracellular-facing; the sequence is EVNFFSLQSGNTWANKTLLCVSTSEYYTELG. N-linked (GlcNAc...) asparagine glycosylation occurs at Asn192. The chain crosses the membrane as a helical span at residues 209-229; sequence MYYHLLVQIPIFFFTVIVMLI. Residues 230–314 are Cytoplasmic-facing; it reads TYTKILQALN…ERQKRVFKMS (85 aa). The chain crosses the membrane as a helical span at residues 315 to 335; that stretch reads LLIISTFLLCWTPISVLNTTI. Residues 336–348 are Extracellular-facing; it reads LCLGPSDLLVKLR. Residues 349 to 369 form a helical membrane-spanning segment; that stretch reads LCFLVMAYGTTIFHPLLYAFT. Residues 370-432 are Cytoplasmic-facing; it reads RQKFQKVLKS…KCLVPQVVTD (63 aa).

This sequence belongs to the G-protein coupled receptor 1 family. In terms of tissue distribution, abundant levels detected in the brain and heart and no detectable expression in other peripheral tissues.

It is found in the cell membrane. Its function is as follows. Orphan G-protein coupled receptor. Seems to act through a G(i)/G(o) mediated pathway. May be involved in ciliogenesis. This chain is G-protein coupled receptor 22 (Gpr22), found in Mus musculus (Mouse).